The following is a 392-amino-acid chain: Iripin-1 (392 aa).

The first 16 residues, 1–16 (MKPLVPLLFLLVSCRA), serve as a signal peptide directing secretion. 3 N-linked (GlcNAc...) asparagine glycosylation sites follow: N104, N196, and N265.

The protein belongs to the serpin family. Interacts with human KLKB1. Interacts with human ST14. Interacts with human PLG (plasmin). In terms of tissue distribution, highly expressed in salivary gland. Expressed in midgut and ovary.

The protein resides in the secreted. In terms of biological role, serine protease inhibitor that modulates blood feeding of ticks on vertebrate species. Modestly inhibits human trypsin, plasma kallikrein (KLKB1), matriptase (ST14) and plasmin (PLG) via a classic serpin inhibitory mechanism. Modestly reduces enzymatic activity of human alpha-chymotrypsin, coagulation factor Xa (F10), factor XIIa (F12), cathepsin G (CTSG), tPA/tissue-type plasminogen activator (PLAT) and uPA/urokinase-type plasminogen activator (PLAU). Probably acts as a substrate rather than an inhibitor for the human neutrophil elastase (ELANE) and thus reduces its enzymatic activity in in vitro assays. Decreases expression of adhesion molecules VCAM1 and CD99 on the surface of human cells. Increases the production of chemokines for neutrophils and monocytes, such as KC/CXCL1, MIP-2/CXCL2 and MIP-1/CCL2, and anti-inflammatory cytokine IL10 in mouse inflammation models. Reduces the recruitment of mouse neutrophils and monocytes to the site of inflammation. Decreases expression of CXCR2 on the surface of mouse neutrophils. Increases expression of integrin ITGAM/ITGB2 on the surface of mouse neutrophils. This is Iripin-1 from Ixodes ricinus (Common tick).